We begin with the raw amino-acid sequence, 103 residues long: Co-chaperonin GroES (103 aa).

Belongs to the GroES chaperonin family. Heptamer of 7 subunits arranged in a ring. Interacts with the chaperonin GroEL.

It localises to the cytoplasm. Together with the chaperonin GroEL, plays an essential role in assisting protein folding. The GroEL-GroES system forms a nano-cage that allows encapsulation of the non-native substrate proteins and provides a physical environment optimized to promote and accelerate protein folding. GroES binds to the apical surface of the GroEL ring, thereby capping the opening of the GroEL channel. This chain is Co-chaperonin GroES, found in Prochlorococcus marinus (strain MIT 9312).